The sequence spans 142 residues: Large ribosomal subunit protein uL13 (142 aa).

The protein belongs to the universal ribosomal protein uL13 family. Part of the 50S ribosomal subunit.

In terms of biological role, this protein is one of the early assembly proteins of the 50S ribosomal subunit, although it is not seen to bind rRNA by itself. It is important during the early stages of 50S assembly. This is Large ribosomal subunit protein uL13 from Vibrio vulnificus (strain CMCP6).